The sequence spans 402 residues: Queuine tRNA-ribosyltransferase-like protein (402 aa).

It belongs to the queuine tRNA-ribosyltransferase family.

The chain is Queuine tRNA-ribosyltransferase-like protein from Theileria parva (East coast fever infection agent).